A 184-amino-acid polypeptide reads, in one-letter code: Nucleoporin-62 C-terminal-like protein (184 aa).

Residues arginine 117–leucine 151 are a coiled coil.

The protein belongs to the nucleoporin NSP1/NUP62 family.

The chain is Nucleoporin-62 C-terminal-like protein (NUP62CL) from Homo sapiens (Human).